We begin with the raw amino-acid sequence, 206 residues long: Translation initiation factor IF-3 (206 aa).

This sequence belongs to the IF-3 family. As to quaternary structure, monomer.

Its subcellular location is the cytoplasm. Functionally, IF-3 binds to the 30S ribosomal subunit and shifts the equilibrium between 70S ribosomes and their 50S and 30S subunits in favor of the free subunits, thus enhancing the availability of 30S subunits on which protein synthesis initiation begins. The chain is Translation initiation factor IF-3 from Chlorobium luteolum (strain DSM 273 / BCRC 81028 / 2530) (Pelodictyon luteolum).